The primary structure comprises 159 residues: bZIP transcription factor 11 (159 aa).

Residues 1-21 are compositionally biased toward low complexity; it reads MESSSSGTTSSTIQTSSGSEE. Positions 1–47 are disordered; sequence MESSSSGTTSSTIQTSSGSEESLMEQRKRKRMLSNRESARRSRMKKQ. The bZIP domain occupies 25–88; it reads EQRKRKRMLS…LTVEAENSVL (64 aa). The tract at residues 27–48 is basic motif; it reads RKRKRMLSNRESARRSRMKKQK. The tract at residues 53-67 is leucine-zipper; the sequence is LTAQVNHLKKENTEI.

In terms of assembly, forms heterodimers with BZIP1, BZIP9, BZIP10, BZIP25 and BZIP63. Interacts with ADA2B. As to expression, highly expressed in stems and flowers. Expressed in root tips, cotyledons, leaf vasculature, embryos, apical parts of siliques and funiculi.

Its subcellular location is the nucleus. Transcription factor that binds to the DNA sequence 5'-ACTCAT-3' in target gene promoters. Promotes POX1/PRODH1 expression in response to hypoosmolarity stress. Positively regulates the expression of ASN1 and POX2/PRODH2 genes, which are involved in amino acid metabolism. Regulates several metabolic pathways such as myo-inositol, raffinose and trehalose. Regulates several trehalose metabolism genes, including TRE1, TPP5 and TPP6. Mediates recruitment of the histone acetylation machinery to activate auxin-induced transcription. Interacts with ADA2B adapter protein to promote ADA2B-mediated recruitment of SAGA-like histone acetyltransferase complexes to specific auxin-responsive genes. The protein is bZIP transcription factor 11 of Arabidopsis thaliana (Mouse-ear cress).